We begin with the raw amino-acid sequence, 291 residues long: Glycine--tRNA ligase alpha subunit (291 aa).

Belongs to the class-II aminoacyl-tRNA synthetase family. In terms of assembly, tetramer of two alpha and two beta subunits.

It is found in the cytoplasm. It catalyses the reaction tRNA(Gly) + glycine + ATP = glycyl-tRNA(Gly) + AMP + diphosphate. In Rhizorhabdus wittichii (strain DSM 6014 / CCUG 31198 / JCM 15750 / NBRC 105917 / EY 4224 / RW1) (Sphingomonas wittichii), this protein is Glycine--tRNA ligase alpha subunit.